The following is a 571-amino-acid chain: Proline--tRNA ligase (571 aa).

The protein belongs to the class-II aminoacyl-tRNA synthetase family. ProS type 1 subfamily. As to quaternary structure, homodimer.

The protein resides in the cytoplasm. It catalyses the reaction tRNA(Pro) + L-proline + ATP = L-prolyl-tRNA(Pro) + AMP + diphosphate. In terms of biological role, catalyzes the attachment of proline to tRNA(Pro) in a two-step reaction: proline is first activated by ATP to form Pro-AMP and then transferred to the acceptor end of tRNA(Pro). As ProRS can inadvertently accommodate and process non-cognate amino acids such as alanine and cysteine, to avoid such errors it has two additional distinct editing activities against alanine. One activity is designated as 'pretransfer' editing and involves the tRNA(Pro)-independent hydrolysis of activated Ala-AMP. The other activity is designated 'posttransfer' editing and involves deacylation of mischarged Ala-tRNA(Pro). The misacylated Cys-tRNA(Pro) is not edited by ProRS. The chain is Proline--tRNA ligase from Ligilactobacillus salivarius (strain UCC118) (Lactobacillus salivarius).